Reading from the N-terminus, the 414-residue chain is 3-oxo-isoapionate-4-phosphate transcarboxylase/hydrolase (414 aa).

Positions 180, 182, and 183 each coordinate Mg(2+). Lysine 180 is subject to N6-carboxylysine.

Belongs to the RuBisCO large chain family. Requires Mg(2+) as cofactor.

It catalyses the reaction 3-oxoisoapionate 4-phosphate + H2O = (2R)-3-phosphoglycerate + glycolate + H(+). The protein operates within carbohydrate metabolism. Functionally, involved in catabolism of D-apiose. Catalyzes the conversion of 3-oxo-isoapionate 4-phosphate to 3-phosphoglycerate and glycolate. The chain is 3-oxo-isoapionate-4-phosphate transcarboxylase/hydrolase from Xanthobacter autotrophicus (strain ATCC BAA-1158 / Py2).